The following is a 172-amino-acid chain: Myosin regulatory light chain 2, smooth muscle minor isoform (172 aa).

The residue at position 2 (serine 2) is an N-acetylserine. A Phosphothreonine; by MLCK modification is found at threonine 19. Serine 20 carries the phosphoserine; by MLCK modification. EF-hand domains follow at residues 29–64 (SQIQEFKEAFNMIDQNRDGFIDKEDLHDMLASLGKN), 98–133 (DPEDVIRNAFACFDEEATGFIQEDYLRELLTTMGDR), and 134–169 (FTDEEVDELYREAPIDKKGNFNYIEFTRILKHGAKD). Residues aspartate 42, asparagine 44, aspartate 46, and aspartate 53 each coordinate Ca(2+).

As to quaternary structure, myosin is a hexamer of 2 heavy chains and 4 light chains. In terms of processing, phosphorylation increases the actin-activated myosin ATPase activity and thereby regulates the contractile activity.

In terms of biological role, myosin regulatory subunit that plays an important role in regulation of both smooth muscle and nonmuscle cell contractile activity. Implicated in cytokinesis, receptor capping, and cell locomotion. The sequence is that of Myosin regulatory light chain 2, smooth muscle minor isoform from Gallus gallus (Chicken).